Reading from the N-terminus, the 497-residue chain is D-gluconate dehydratase (497 aa).

A Mg(2+)-binding site is contributed by Glu303. Residue His305 is the Proton donor of the active site. Mg(2+) is bound by residues Glu329 and Glu355. His405 acts as the Proton acceptor in catalysis.

This sequence belongs to the mandelate racemase/muconate lactonizing enzyme family. GaD subfamily. Requires Mg(2+) as cofactor.

It carries out the reaction D-gluconate = 2-dehydro-3-deoxy-D-gluconate + H2O. It participates in carbohydrate acid metabolism; D-gluconate degradation. Functionally, involved in the degradation of glucose via the Entner-Doudoroff pathway. Catalyzes the dehydration of gluconate to produce 2-keto-3-deoxygluconate (KDG). It is not able to use D-galactonate as substrate. In Thermoproteus tenax, this protein is D-gluconate dehydratase (gad).